A 360-amino-acid chain; its full sequence is POU domain, class 5, transcription factor 1 (360 aa).

Disordered stretches follow at residues 1 to 52 (MAGH…PGVG) and 88 to 114 (GGLE…SPEP). A 9aaTAD motif is present at residues 4-12 (HLASDFAFS). Serine 111 carries the phosphoserine; by MAPK modification. Lysine 123 is covalently cross-linked (Glycyl lysine isopeptide (Lys-Gly) (interchain with G-Cter in SUMO)). Positions 138–212 (DIKALQKELE…LLQKWVEEAD (75 aa)) constitute a POU-specific domain. Residues arginine 157 and glutamine 164 each contribute to the DNA site. DNA-binding stretches follow at residues 180-186 (SQTTICR) and 193-196 (SFKN). Positions 230 to 289 (RKRKRTSIENRVRGNLENLFLQCPKPTLQQISHIAQQLGLEKDVVRVWFCNRRQKGKRSS) form a DNA-binding region, homeobox. Threonine 235 is subject to Phosphothreonine. 4 positions are modified to phosphoserine: serine 236, serine 289, serine 290, and serine 355.

It belongs to the POU transcription factor family. Class-5 subfamily. In terms of assembly, interacts with PKM. Interacts with WWP2. Interacts with UBE2I and ZSCAN10. Interacts with PCGF1. Interacts with ESRRB; recruits ESRRB near the POU5F1-SOX2 element in the NANOG proximal promoter; the interaction is DNA independent. Interacts with ZNF322. Interacts with MAPK8 and MAPK9; the interaction allows MAPK8 and MAPK9 to phosphorylate POU5F1 on Ser-355. Interacts (when phosphorylated on Ser-355) with FBXW8. Interacts with FBXW4. Interacts with SOX2 and SOX15; binds synergistically with either SOX2 or SOX15 to DNA. Interacts with DDX56. Sumoylation enhances the protein stability, DNA binding and transactivation activity. Sumoylation is required for enhanced YES1 expression. In terms of processing, ubiquitinated; undergoes 'Lys-63'-linked polyubiquitination by WWP2 leading to proteasomal degradation. Post-translationally, ERK1/2-mediated phosphorylation at Ser-111 promotes nuclear exclusion and proteasomal degradation. Phosphorylation at Thr-235 and Ser-236 decrease DNA-binding and alters ability to activate transcription. In terms of tissue distribution, expressed in developing brain. Highest levels found in specific cell layers of the cortex, the olfactory bulb, the hippocampus and the cerebellum. Low levels of expression in adult tissues.

It localises to the cytoplasm. The protein localises to the nucleus. Functionally, transcription factor that binds to the octamer motif (5'-ATTTGCAT-3'). Forms a trimeric complex with SOX2 or SOX15 on DNA and controls the expression of a number of genes involved in embryonic development such as YES1, FGF4, UTF1 and ZFP206. Critical for early embryogenesis and for embryonic stem cell pluripotency. The sequence is that of POU domain, class 5, transcription factor 1 (POU5F1) from Homo sapiens (Human).